The following is a 943-amino-acid chain: Isoleucine--tRNA ligase (943 aa).

A 'HIGH' region motif is present at residues 58–68 (PYANGSIHIGH). Glutamate 567 is an L-isoleucyl-5'-AMP binding site. Positions 608–612 (KMSKS) match the 'KMSKS' region motif. Lysine 611 serves as a coordination point for ATP. Zn(2+)-binding residues include cysteine 906, cysteine 909, cysteine 926, and cysteine 929.

The protein belongs to the class-I aminoacyl-tRNA synthetase family. IleS type 1 subfamily. In terms of assembly, monomer. Zn(2+) is required as a cofactor.

It is found in the cytoplasm. It catalyses the reaction tRNA(Ile) + L-isoleucine + ATP = L-isoleucyl-tRNA(Ile) + AMP + diphosphate. Functionally, catalyzes the attachment of isoleucine to tRNA(Ile). As IleRS can inadvertently accommodate and process structurally similar amino acids such as valine, to avoid such errors it has two additional distinct tRNA(Ile)-dependent editing activities. One activity is designated as 'pretransfer' editing and involves the hydrolysis of activated Val-AMP. The other activity is designated 'posttransfer' editing and involves deacylation of mischarged Val-tRNA(Ile). The protein is Isoleucine--tRNA ligase of Pseudomonas aeruginosa (strain LESB58).